The following is a 461-amino-acid chain: O-methyltransferase CTB2 (461 aa).

Position 288 (aspartate 288) interacts with S-adenosyl-L-methionine. Catalysis depends on histidine 339, which acts as the Proton acceptor.

It belongs to the class I-like SAM-binding methyltransferase superfamily. Cation-independent O-methyltransferase family. COMT subfamily.

It functions in the pathway mycotoxin biosynthesis. In terms of biological role, O-methyltransferase; part of the gene cluster that mediates the biosynthesis of cercosporin, a light-activated, non-host-selective toxin. The perylenequinone chromophore of cercosporin absorbs light energy to attain an electronically-activated triplet state and produces active oxygen species such as the hydroxyl radical, superoxide, hydrogen peroxide or singlet oxygen upon reaction with oxygen molecules. These reactive oxygen species cause damage to various cellular components including lipids, proteins and nucleic acids. The first step of cercosporin biosynthesis is performed by the polyketide synthase CTB1 which catalyzes the formation of nor-toralactone. The starter unit acyltransferase (SAT) domain of CTB1 initiates polyketide extension by the selective utilization of acetyl-CoA, which is elongated to the heptaketide in the beta-ketoacyl synthase (KS) domain by successive condensations with six malonyl units introduced by the malonyl acyltransferase (MAT) domain. The product template (PT) domain catalyzes C4-C9 and C2-C11 aldol cyclizations and dehydrations to a trihydroxynaphthalene, which is thought to be delivered to the thioesterase (TE) domain for product release. The bifunctional enzyme CTB3 then methylates nor-toralactone to toralactone before conducting an unusual oxidative aromatic ring opening. The O-methyltransferase CTB2 further methylates the nascent OH-6 of the CBT3 product, blocking further oxidation at this site before the reductase CTB6 reduces the 2-oxopropyl ketone at position C7, giving naphthalene. The FAD-dependent monooxygenase CTB5 in concert with the multicopper oxidase CTB12 are responsible for homodimerization of naphthalene with CTB7 installing the dioxepine moiety, finally producing cercosporin. The fasciclin domain-containing protein CTB11 might act with CTB5 and CTB12 whereas the roles of CTB9 and CTB10 have still to be elucidated. The chain is O-methyltransferase CTB2 from Cercospora nicotianae (Barn spot disease fungus).